The chain runs to 706 residues: MMNPQRNKFVRFNGNDDEFSTKTTRPSVSSVMKTVRRSFEKGSEKIRTFKRPLSVHSNKNKENNKKKKILRVMNPNDSYLQSWNKIFLLLSVVALAFDPLFFYIPYVKPERFCLNLDKKLQTIACVFRTFIDAFYVVHMLFQFHTGFITPSSSGFGRGELNEKHKDIALRYLGSYFLIDLLSILPIPQVVVLAIVPRMRRPASLVAKELLKWVIFCQYVPRIARIYPLFKEVTRTSGLVTETAWAGAALNLFLYMLASHVFGSFWYLISIERKDRCWREACAKIQNCTHAYLYCSPTGEDNRLFLNGSCPLIDPEEITNSTVFNFGIFADALQSGVVESRDFPKKFFYCFWWGLRNLSALGQNLKTSAFEGEIIFAIVICISGLVLFALLIGNMQKYLQSTTVRVEEMRVKRRDAEQWMSHRMLPDDLRKRIRKYEQYKWQETKGVEEEALLSSLPKDLRKDIKRHLCLKLLKKVPWFQAMDDRLLDALCARLKTVLYTEKSYIVREGEPVEDMLFIMRGNLISTTTYGGRTGFFNSVDLVAGDFCGDLLTWALDPLSSQFPISSRTVQALTEVEGFLLSADDLKFVATQYRRLHSKQLRHMFRFYSVQWQTWAACFIQAAWKRHCRRKLSKALREEEGKLHNTLQNDDSGGNKLNLGAAIYASRFASHALRNLRANAAARNSRFPHMLTLLPQKPADPEFPMDET.

The Cytoplasmic segment spans residues 1–85 (MMNPQRNKFV…NDSYLQSWNK (85 aa)). A helical transmembrane segment spans residues 86 to 106 (IFLLLSVVALAFDPLFFYIPY). Over 107-119 (VKPERFCLNLDKK) the chain is Extracellular. A helical membrane pass occupies residues 120-140 (LQTIACVFRTFIDAFYVVHML). Over 141-174 (FQFHTGFITPSSSGFGRGELNEKHKDIALRYLGS) the chain is Cytoplasmic. A helical transmembrane segment spans residues 175–195 (YFLIDLLSILPIPQVVVLAIV). At 196 to 208 (PRMRRPASLVAKE) the chain is on the extracellular side. A helical transmembrane segment spans residues 209–229 (LLKWVIFCQYVPRIARIYPLF). Residues 230–247 (KEVTRTSGLVTETAWAGA) lie on the Cytoplasmic side of the membrane. The chain crosses the membrane as a helical span at residues 248–268 (ALNLFLYMLASHVFGSFWYLI). Over 269 to 371 (SIERKDRCWR…QNLKTSAFEG (103 aa)) the chain is Extracellular. Residues 372–392 (EIIFAIVICISGLVLFALLIG) form a helical membrane-spanning segment. The Cytoplasmic portion of the chain corresponds to 393–706 (NMQKYLQSTT…ADPEFPMDET (314 aa)). Residues 477-600 (WFQA…KQLR) and Asp548 each bind a nucleoside 3',5'-cyclic phosphate. The calmodulin-binding stretch occupies residues 591 to 606 (YRRLHSKQLRHMFRFY). The 30-residue stretch at 611 to 640 (QTWAACFIQAAWKRHCRRKLSKALREEEGK) folds into the IQ domain.

It belongs to the cyclic nucleotide-gated cation channel (TC 1.A.1.5) family. Homotetramer or heterotetramer.

It localises to the cell membrane. Its function is as follows. Probable cyclic nucleotide-gated ion channel. In Arabidopsis thaliana (Mouse-ear cress), this protein is Probable cyclic nucleotide-gated ion channel 3 (CNGC3).